The sequence spans 208 residues: Uracil phosphoribosyltransferase (208 aa).

5-phospho-alpha-D-ribose 1-diphosphate-binding positions include Arg-78, Arg-103, and 130–138 (DPMLATGGS). Residues Ile-193 and 198 to 200 (GDA) contribute to the uracil site. Asp-199 provides a ligand contact to 5-phospho-alpha-D-ribose 1-diphosphate.

This sequence belongs to the UPRTase family. Requires Mg(2+) as cofactor.

The catalysed reaction is UMP + diphosphate = 5-phospho-alpha-D-ribose 1-diphosphate + uracil. Its pathway is pyrimidine metabolism; UMP biosynthesis via salvage pathway; UMP from uracil: step 1/1. Allosterically activated by GTP. Catalyzes the conversion of uracil and 5-phospho-alpha-D-ribose 1-diphosphate (PRPP) to UMP and diphosphate. This chain is Uracil phosphoribosyltransferase, found in Photorhabdus laumondii subsp. laumondii (strain DSM 15139 / CIP 105565 / TT01) (Photorhabdus luminescens subsp. laumondii).